The chain runs to 305 residues: UDP-3-O-acyl-N-acetylglucosamine deacetylase (305 aa).

Residues His-77, His-234, and Asp-238 each coordinate Zn(2+). The Proton donor role is filled by His-261.

This sequence belongs to the LpxC family. Zn(2+) serves as cofactor.

The catalysed reaction is a UDP-3-O-[(3R)-3-hydroxyacyl]-N-acetyl-alpha-D-glucosamine + H2O = a UDP-3-O-[(3R)-3-hydroxyacyl]-alpha-D-glucosamine + acetate. It functions in the pathway glycolipid biosynthesis; lipid IV(A) biosynthesis; lipid IV(A) from (3R)-3-hydroxytetradecanoyl-[acyl-carrier-protein] and UDP-N-acetyl-alpha-D-glucosamine: step 2/6. Catalyzes the hydrolysis of UDP-3-O-myristoyl-N-acetylglucosamine to form UDP-3-O-myristoylglucosamine and acetate, the committed step in lipid A biosynthesis. This is UDP-3-O-acyl-N-acetylglucosamine deacetylase from Oleidesulfovibrio alaskensis (strain ATCC BAA-1058 / DSM 17464 / G20) (Desulfovibrio alaskensis).